Reading from the N-terminus, the 209-residue chain is Probable GTP-binding protein EngB (209 aa).

Residues 27–201 (SGVEIAFAGR…ATKLDSWFAE (175 aa)) enclose the EngB-type G domain. Residues 35 to 42 (GRSNAGKS), 62 to 66 (GRTQL), 80 to 83 (DLPG), 147 to 150 (TKAD), and 180 to 182 (YSA) each bind GTP. The Mg(2+) site is built by serine 42 and threonine 64.

Belongs to the TRAFAC class TrmE-Era-EngA-EngB-Septin-like GTPase superfamily. EngB GTPase family. Mg(2+) serves as cofactor.

Its function is as follows. Necessary for normal cell division and for the maintenance of normal septation. This is Probable GTP-binding protein EngB from Glaesserella parasuis serovar 5 (strain SH0165) (Haemophilus parasuis).